The following is a 405-amino-acid chain: MIHQPPAGTRDLLPLEVTQKGWINDRLQSVFQRWGYQRIVTSTIEWLDTLTAGGAIDPSTVIQLHGDSQGLSGLRPELTASIARSAVTRMSGESYPQRLCYRANVFRRPSAGYHGRQVEFYQAGVELLFSGGLLADAEILLLLADCFDSLAVPNWQIILGEAGLTRSLLSPFPAPLREQVKRCLALLDYVSLENLPYPNETLRQQARQLFHLRGNPEDVLAQVALLAQEESAQKAVNNLKSLVELLNADRSGPFPLILDLSLIQTFDYYTGIVFKAVSDHQQNLSILGQGGRYDQLLGVFHPQGQSAPGIGFSLNIEELHESLLSGQTLPTQAAPLDWLLIPLGNNAQIATFSKARSLRNGDPNLRVAIDLGGRSEAQIRTYARDRMIKNLAWVQEDGSVSEESL.

The protein belongs to the class-II aminoacyl-tRNA synthetase family. HisZ subfamily. In terms of assembly, heteromultimer composed of HisG and HisZ subunits.

It localises to the cytoplasm. The protein operates within amino-acid biosynthesis; L-histidine biosynthesis; L-histidine from 5-phospho-alpha-D-ribose 1-diphosphate: step 1/9. Its function is as follows. Required for the first step of histidine biosynthesis. May allow the feedback regulation of ATP phosphoribosyltransferase activity by histidine. The protein is ATP phosphoribosyltransferase regulatory subunit of Microcystis aeruginosa (strain NIES-843 / IAM M-2473).